The sequence spans 196 residues: MGLELPLILGTSSVFRREQMERLGIAFQAASPDFDETPMLGESAPQTALRLAEGKARSLTGRFPEALIVGADQVAWCDGRQWGKPMNLANAQKMLMHLSGREIEFYSAIVLLNTVTGRMRRHIDKTVVVMRQLDELHILRYLEREPDAVYCSCALKSEDLGALLIERIESTDPNALIGLPVFRLVDFLKNEGVEVL.

Asp-72 serves as the catalytic Proton acceptor.

This sequence belongs to the Maf family. YceF subfamily. A divalent metal cation is required as a cofactor.

The protein resides in the cytoplasm. The catalysed reaction is N(7)-methyl-GTP + H2O = N(7)-methyl-GMP + diphosphate + H(+). Functionally, nucleoside triphosphate pyrophosphatase that hydrolyzes 7-methyl-GTP (m(7)GTP). May have a dual role in cell division arrest and in preventing the incorporation of modified nucleotides into cellular nucleic acids. The chain is 7-methyl-GTP pyrophosphatase from Neisseria meningitidis serogroup B (strain ATCC BAA-335 / MC58).